The following is a 1407-amino-acid chain: JmjC domain-containing histone demethylation protein 1 (1407 aa).

Disordered stretches follow at residues 1-86 (MISA…SSTI) and 98-151 (PTFT…NAFS). Composition is skewed to basic and acidic residues over residues 55–67 (DHVRSTPTDKRPS) and 125–140 (PVERPAKRPRSERDES). The segment covering 141–150 (SYTQHRSNAF) has biased composition (polar residues). The PHD-type zinc-finger motif lies at 323 to 382 (QASCATCNLVRIPVDNEDQDVTWISCDGCKRWFHIVCAGFKNDRETRTVDKFICKTCRPI). Positions 577-735 (VSQSKLGRLI…MQIKIAKIEK (159 aa)) constitute a JmjC domain. Threonine 628 serves as a coordination point for substrate. Positions 631 and 633 each coordinate Fe cation. Lysine 648 is a substrate binding site. Fe cation is bound at residue histidine 703. 4 disordered regions span residues 893–987 (KLSL…LGPK), 1004–1027 (KEENNGASGSQMTVSTSSLGHHTP), 1122–1183 (IKAQ…QDSV), and 1252–1389 (DEMD…SLRL). Composition is skewed to basic and acidic residues over residues 896 to 914 (LAEKRPAGRPSRRSERNAD) and 928 to 938 (LSERPAVDIQK). Over residues 1008–1027 (NGASGSQMTVSTSSLGHHTP) the composition is skewed to polar residues. The span at 1254–1264 (MDIHDQVDAGG) shows a compositional bias: basic and acidic residues. Residues 1273 to 1284 (PSSGSRQSSRQP) are compositionally biased toward low complexity. Positions 1285-1296 (RQVERYMPEVHF) are enriched in basic and acidic residues. The segment covering 1297–1349 (AKTAKSTTTTPQTTRRSSFGSSGRKTTPGLSSGSKKSGSRPSSSHGKKSLSPS) has biased composition (low complexity).

The protein belongs to the JHDM1 histone demethylase family. Fe(2+) serves as cofactor.

The protein resides in the nucleus. The catalysed reaction is N(6),N(6)-dimethyl-L-lysyl(36)-[histone H3] + 2 2-oxoglutarate + 2 O2 = L-lysyl(36)-[histone H3] + 2 formaldehyde + 2 succinate + 2 CO2. In terms of biological role, histone demethylase that specifically demethylates 'Lys-36' of histone H3, thereby playing a central role in histone code. The sequence is that of JmjC domain-containing histone demethylation protein 1 (jhd1) from Emericella nidulans (strain FGSC A4 / ATCC 38163 / CBS 112.46 / NRRL 194 / M139) (Aspergillus nidulans).